The sequence spans 393 residues: Cytochrome b (393 aa).

The Mitochondrial matrix portion of the chain corresponds to 1 to 33; sequence MTIRNQRFSLLKQPISSTLNQHLVDYPTPSNLS. Residues 34–57 form a helical membrane-spanning segment; sequence YWWGFGSLAGICLVIQIVTGVFLA. The Mitochondrial intermembrane segment spans residues 58-80; that stretch reads MHYTPHVDLAFNSVEHIMRDVEG. A helical membrane pass occupies residues 81 to 108; sequence GWLLRYMHANGASMFFIVVYLHIFRGLY. The heme b site is built by His-88 and His-102. The Mitochondrial matrix segment spans residues 109–116; the sequence is YASYSSPR. Residues 117–141 form a helical membrane-spanning segment; that stretch reads EFVWCLGVVIFLLMIVTAFIGYVLP. The Mitochondrial intermembrane segment spans residues 142-178; it reads WGQMSFWGATVITSLASAIPVVGDTIVTWLWGGFSVD. A helical transmembrane segment spans residues 179 to 210; the sequence is NATLNRFFSLHYLLPFILVGASLLHLAALHQY. Residues His-189 and His-203 each contribute to the heme b site. His-208 serves as a coordination point for a ubiquinone. The Mitochondrial matrix segment spans residues 211 to 229; the sequence is GSNNPLGVHSEMDKIAFYP. A helical transmembrane segment spans residues 230-252; the sequence is YFYVKDLVGWVAFAIFFSIWIFY. At 253-293 the chain is on the mitochondrial intermembrane side; it reads APNVLGHPDNYIPANPMSTPPHIVPEWYFLPIYAILRSIPD. Residues 294 to 314 form a helical membrane-spanning segment; that stretch reads KAGGVAAIALVFICLLALPFF. Topologically, residues 315-325 are mitochondrial matrix; the sequence is KSMYVRSSSFR. A helical transmembrane segment spans residues 326-346; sequence PIYQGMFWLLLADCLLLGWIG. Topologically, residues 347–353 are mitochondrial intermembrane; it reads CQPVEAP. A helical membrane pass occupies residues 354–370; sequence FVTIGQISSLVFFLFFA. Over 371–393 the chain is Mitochondrial matrix; that stretch reads ITPILGRVGRGIPNSYTDETDHT.

It belongs to the cytochrome b family. Component of the ubiquinol-cytochrome c oxidoreductase (cytochrome b-c1 complex, complex III, CIII), a multisubunit enzyme composed of 10 subunits. The complex is composed of 3 respiratory subunits cytochrome b (MT-CYB), cytochrome c1 (CYC1-1 or CYC1-2) and Rieske protein (UCR1-1 or UCR1-2), 2 core protein subunits MPPalpha1 (or MPPalpha2) and MPPB, and 5 low-molecular weight protein subunits QCR7-1 (or QCR7-2), UCRQ-1 (or UCRQ-2), QCR9, UCRY and probably QCR6-1 (or QCR6-2). The complex exists as an obligatory dimer and forms supercomplexes (SCs) in the inner mitochondrial membrane with NADH-ubiquinone oxidoreductase (complex I, CI), resulting in different assemblies (supercomplexes SCI(1)III(2) and SCI(2)III(4)). Requires heme b as cofactor.

It localises to the mitochondrion inner membrane. Component of the ubiquinol-cytochrome c oxidoreductase, a multisubunit transmembrane complex that is part of the mitochondrial electron transport chain which drives oxidative phosphorylation. The respiratory chain contains 3 multisubunit complexes succinate dehydrogenase (complex II, CII), ubiquinol-cytochrome c oxidoreductase (cytochrome b-c1 complex, complex III, CIII) and cytochrome c oxidase (complex IV, CIV), that cooperate to transfer electrons derived from NADH and succinate to molecular oxygen, creating an electrochemical gradient over the inner membrane that drives transmembrane transport and the ATP synthase. The cytochrome b-c1 complex catalyzes electron transfer from ubiquinol to cytochrome c, linking this redox reaction to translocation of protons across the mitochondrial inner membrane, with protons being carried across the membrane as hydrogens on the quinol. In the process called Q cycle, 2 protons are consumed from the matrix, 4 protons are released into the intermembrane space and 2 electrons are passed to cytochrome c. Cytochrome b is a catalytic core subunit containing 2 b-type hemes BL and BH topographically segregated in the quinone reduction (Qi) and quinol oxidation (Q0) sites on opposite sides of the membrane. The chain is Cytochrome b (MT-CYB) from Arabidopsis thaliana (Mouse-ear cress).